We begin with the raw amino-acid sequence, 208 residues long: Large ribosomal subunit protein uL3 (208 aa).

Residues Ser-134–Phe-153 are disordered.

It belongs to the universal ribosomal protein uL3 family. Part of the 50S ribosomal subunit. Forms a cluster with proteins L14 and L19.

Its function is as follows. One of the primary rRNA binding proteins, it binds directly near the 3'-end of the 23S rRNA, where it nucleates assembly of the 50S subunit. This chain is Large ribosomal subunit protein uL3, found in Treponema pallidum (strain Nichols).